A 904-amino-acid chain; its full sequence is NADH-quinone oxidoreductase subunit G (904 aa).

Residues 1–83 (MATIHVDGKE…GSWISIDDEE (83 aa)) enclose the 2Fe-2S ferredoxin-type domain. 4 residues coordinate [2Fe-2S] cluster: cysteine 34, cysteine 45, cysteine 48, and cysteine 67. Residues 83-122 (EAKVFRASVVEWLMTNHPHDCPVCEEGGHCHLQDMTVMTG) enclose the 4Fe-4S His(Cys)3-ligated-type domain. [4Fe-4S] cluster-binding residues include histidine 99, cysteine 103, cysteine 106, cysteine 112, cysteine 151, cysteine 154, cysteine 157, cysteine 201, cysteine 228, cysteine 231, cysteine 235, and cysteine 263. A 4Fe-4S Mo/W bis-MGD-type domain is found at 221–277 (MQFSPSICHGCSSGCNISPGERYGELRRIENRFNGSVNQYFLCDRGRFGYGYVNRKD).

The protein belongs to the complex I 75 kDa subunit family. As to quaternary structure, composed of 13 different subunits. Subunits NuoCD, E, F, and G constitute the peripheral sector of the complex. It depends on [2Fe-2S] cluster as a cofactor. The cofactor is [4Fe-4S] cluster.

It catalyses the reaction a quinone + NADH + 5 H(+)(in) = a quinol + NAD(+) + 4 H(+)(out). Functionally, NDH-1 shuttles electrons from NADH, via FMN and iron-sulfur (Fe-S) centers, to quinones in the respiratory chain. The immediate electron acceptor for the enzyme in this species is believed to be ubiquinone. Couples the redox reaction to proton translocation (for every two electrons transferred, four hydrogen ions are translocated across the cytoplasmic membrane), and thus conserves the redox energy in a proton gradient. Required for plants roots colonization. The chain is NADH-quinone oxidoreductase subunit G (nuoG) from Pseudomonas fluorescens.